The primary structure comprises 393 residues: Trehalose import ATP-binding protein SugC (393 aa).

In terms of domain architecture, ABC transporter spans 4–235; the sequence is IVLDHVNKSY…PANLFVAGFI (232 aa). 37–44 is an ATP binding site; it reads GPSGCGKT. A Helical C-loop; LSGGQ motif motif is present at residues 135–139; it reads LSGGQ.

The protein belongs to the ABC transporter superfamily. As to quaternary structure, monomer. Homodimerizes in the presence of ATP. The complex is composed of two ATP-binding proteins (SugC), two transmembrane proteins (SugA and SugB) and a solute-binding protein (LpqY).

Its subcellular location is the cell inner membrane. The enzyme catalyses alpha,alpha-trehalose(out) + ATP + H2O = alpha,alpha-trehalose(in) + ADP + phosphate + H(+). In terms of biological role, part of the ABC transporter complex LpqY-SugA-SugB-SugC, which is highly specific for uptake of trehalose. Involved in the recycling of extracellular trehalose released from trehalose-containing molecules synthesized by M.tuberculosis. Trehalose uptake is essential for virulence. Responsible for energy coupling to the transport system. The sequence is that of Trehalose import ATP-binding protein SugC (sugC) from Mycobacterium tuberculosis (strain CDC 1551 / Oshkosh).